The sequence spans 428 residues: Ribosomal RNA small subunit methyltransferase B (428 aa).

S-adenosyl-L-methionine contacts are provided by residues 253 to 259 (CAAPGGK), D276, D302, and D321. Catalysis depends on C374, which acts as the Nucleophile.

Belongs to the class I-like SAM-binding methyltransferase superfamily. RsmB/NOP family.

The protein localises to the cytoplasm. It catalyses the reaction cytidine(967) in 16S rRNA + S-adenosyl-L-methionine = 5-methylcytidine(967) in 16S rRNA + S-adenosyl-L-homocysteine + H(+). Its function is as follows. Specifically methylates the cytosine at position 967 (m5C967) of 16S rRNA. The chain is Ribosomal RNA small subunit methyltransferase B from Enterobacter sp. (strain 638).